The primary structure comprises 573 residues: MDCPLENVLDLIKYFRKEWPVVSDSERTTIYGADNMLLTLQLALAEVNKQNGKEFSASLSDVLLTWKCLVKHKLGLAYEDTAVPENYADIRKTYELFLKTSNSLDLIDIYEKISTLGSSEPHNFTSEQLLEFLTEDECFSGDKDFPVVSTPCKNNFDVVKVKATLKRIFLAYLNLLVNSKNDFALAQVLNCPERGLGREAFTDLKHTSRMKNMSLFLVATSFIRTIELGGKGYAPSESDPLRKHLKGLSLFVHFVDRLNEVLGETNDPRTAGELLLSTIKMHLIKGRSSGDPLSEAATDVAQDLDLRIKNLINLLSEDKYSVTPGISPARPKIHAINRGTASGGREMIKTLLKLLDEEAANPPSKNKADLLCADEENTLFGAVSLFTLFRSPEQKNGSSPKPLSHRVQKAMDKNKPKLKQNLIRSQFACTYKDGNLAQIKQWDFPSLSQVPTCIHPAPRIAPVLCFDEEPLENSDLQKQELKLSSGNIDLKTGGQVKNKPCKNVANKRSKRKQVDIQSETTNAQENEPPQKKAVVEITSKKENKPCVTRNCNKSSSKNKLIAGQAKLTSFFRV.

A disordered region spans residues 492-532 (TGGQVKNKPCKNVANKRSKRKQVDIQSETTNAQENEPPQKK). A compositionally biased stretch (polar residues) spans 515–527 (DIQSETTNAQENE).

The protein belongs to the PARI family.

Its subcellular location is the cytoplasm. It is found in the nucleus. In terms of biological role, required to suppress inappropriate homologous recombination, thereby playing a central role DNA repair and in the maintenance of genomic stability. In Xenopus tropicalis (Western clawed frog), this protein is PCNA-interacting partner (parpbp).